Consider the following 359-residue polypeptide: MIAIPSDRLDAILARHDIVTATLSAGEADSESFVQLSRELSDLDDVVAAIRAYRAADAELRGVEAMLEEGDPEMRALAAEEKPEVEAARDAAAKALQILLLPKDSADEKSAILEIRAGTGGDEAALFAGDLFRMYARYADLKGWKVEVVSESPGTMGGYREVVAEVKGRGVFARLKFESGAHRVQRVPETETQGRIHTSAATVAVLPEAEEVDIHVNEADLKIDTMRAQGAGGQHVNKTESAIRITHMPSGIVVFVQEERSQHKNRARAMAVLRARLYEQERSQKDAARAADRRAQVGSGDRSERIRTYNFPQGRVTDHRINLTLYKLEEVLAGTALDELVDALVTEHQAALLAAEGLG.

Residue glutamine 234 is modified to N5-methylglutamine. Positions serine 283–arginine 305 are disordered.

This sequence belongs to the prokaryotic/mitochondrial release factor family. In terms of processing, methylated by PrmC. Methylation increases the termination efficiency of RF1.

The protein resides in the cytoplasm. Its function is as follows. Peptide chain release factor 1 directs the termination of translation in response to the peptide chain termination codons UAG and UAA. This is Peptide chain release factor 1 from Methylobacterium nodulans (strain LMG 21967 / CNCM I-2342 / ORS 2060).